We begin with the raw amino-acid sequence, 105 residues long: UPF0235 protein Mchl_2407 (105 aa).

It belongs to the UPF0235 family.

This Methylorubrum extorquens (strain CM4 / NCIMB 13688) (Methylobacterium extorquens) protein is UPF0235 protein Mchl_2407.